We begin with the raw amino-acid sequence, 59 residues long: Large ribosomal subunit protein bL32 (59 aa).

The segment at 1–59 is disordered; sequence MAVQQNKKSPSKRGMHRSHDHLSAAPLAVEPTTGETHLRHHVSPNGYYRGRKVIKTKND. Composition is skewed to basic residues over residues 9-19 and 49-59; these read SPSKRGMHRSH and RGRKVIKTKND.

It belongs to the bacterial ribosomal protein bL32 family.

This Cupriavidus necator (strain ATCC 17699 / DSM 428 / KCTC 22496 / NCIMB 10442 / H16 / Stanier 337) (Ralstonia eutropha) protein is Large ribosomal subunit protein bL32.